Reading from the N-terminus, the 1077-residue chain is Adenylate cyclase type 4 (1077 aa).

Topologically, residues 1–28 (MARLFSPRPPPSEDLFYETYYSLSQQYP) are cytoplasmic. A run of 6 helical transmembrane segments spans residues 29–50 (LLIL…VAWA), 61–80 (FLTT…GLAS), 94–117 (GLIW…VSAW), 120–138 (VSFF…PLGM), 141–162 (AAAA…YLGW), and 170–190 (LLPQ…VGAY). At 191-582 (HKALMERALR…YRLSALPAFK (392 aa)) the chain is on the cytoplasmic side. Mg(2+) contacts are provided by Asp278, Ile279, and Asp322. Residues 278–283 (DIVGFT), 320–322 (LGD), and Arg366 contribute to the ATP site. Residues 503 to 524 (TSTPLPEKAFSPQWSLDRSRTP) form a disordered region. The residue at position 517 (Ser517) is a Phosphoserine. At Thr533 the chain carries Phosphothreonine. 3 helical membrane-spanning segments follow: residues 583–604 (YYAA…LVTT), 608–630 (ALII…CFSE), and 661–684 (VALG…FLPV). The Extracellular portion of the chain corresponds to 685 to 717 (SSDCLFLASNVSSVTFNASWEMPGSLPLISIPL). N-linked (GlcNAc...) asparagine glycosylation is found at Asn694 and Asn701. The next 3 membrane-spanning stretches (helical) occupy residues 718-738 (ISIP…SLFL), 746-766 (LLLL…SHAW), and 793-809 (MGAI…LVLA). The Cytoplasmic portion of the chain corresponds to 810-1077 (RQNEYYCRLD…LTRTGSPSAS (268 aa)). Residues Lys927, 1007–1009 (DIW), 1014–1018 (NVASR), and Lys1054 contribute to the ATP site.

It belongs to the adenylyl cyclase class-4/guanylyl cyclase family. Mg(2+) serves as cofactor. Requires Mn(2+) as cofactor.

The protein resides in the cell membrane. Its subcellular location is the cytoplasm. It carries out the reaction ATP = 3',5'-cyclic AMP + diphosphate. With respect to regulation, activated by forskolin. Insensitive to calcium/calmodulin. Stimulated by GNAS and by the G-protein beta and gamma subunit complex. In terms of biological role, catalyzes the formation of the signaling molecule cAMP in response to G-protein signaling. This Mus musculus (Mouse) protein is Adenylate cyclase type 4 (Adcy4).